The chain runs to 995 residues: S1 RNA-binding domain-containing protein 1 (995 aa).

The segment at 23–81 (SFSELSSASEEDDKEDSAWEPQKKVPRSRKQPPPKESKPKRMPRVKKNAPQISDGSEVV) is disordered. Glycyl lysine isopeptide (Lys-Gly) (interchain with G-Cter in SUMO2) cross-links involve residues K84 and K134. Positions 120 to 165 (CAAQPHTVRRTKKLKVEEETSKASNLEGESNSSETPSTSTVWGGTC) are disordered. Positions 146–159 (EGESNSSETPSTST) are enriched in low complexity. Glycyl lysine isopeptide (Lys-Gly) (interchain with G-Cter in SUMO2) cross-links involve residues K166, K167, and K183. K185 is covalently cross-linked (Glycyl lysine isopeptide (Lys-Gly) (interchain with G-Cter in SUMO1); alternate). A Glycyl lysine isopeptide (Lys-Gly) (interchain with G-Cter in SUMO2); alternate cross-link involves residue K185. Residues 258–288 (ADSLREVQQTLEELRAVAKKVHSTIQKIKKE) are a coiled coil. S861 is subject to Phosphoserine. Positions 919-992 (GTVLTGKVEN…PRSRITLDLI (74 aa)) constitute an S1 motif domain. K955 is covalently cross-linked (Glycyl lysine isopeptide (Lys-Gly) (interchain with G-Cter in SUMO2)). Phosphoserine is present on S964.

The sequence is that of S1 RNA-binding domain-containing protein 1 (SRBD1) from Homo sapiens (Human).